The sequence spans 141 residues: D-aminoacyl-tRNA deacylase (141 aa).

Positions 133 to 134 (GP) match the Gly-cisPro motif, important for rejection of L-amino acids motif.

It belongs to the DTD family. As to quaternary structure, homodimer.

Its subcellular location is the cytoplasm. The enzyme catalyses glycyl-tRNA(Ala) + H2O = tRNA(Ala) + glycine + H(+). It carries out the reaction a D-aminoacyl-tRNA + H2O = a tRNA + a D-alpha-amino acid + H(+). An aminoacyl-tRNA editing enzyme that deacylates mischarged D-aminoacyl-tRNAs. Also deacylates mischarged glycyl-tRNA(Ala), protecting cells against glycine mischarging by AlaRS. Acts via tRNA-based rather than protein-based catalysis; rejects L-amino acids rather than detecting D-amino acids in the active site. By recycling D-aminoacyl-tRNA to D-amino acids and free tRNA molecules, this enzyme counteracts the toxicity associated with the formation of D-aminoacyl-tRNA entities in vivo and helps enforce protein L-homochirality. The chain is D-aminoacyl-tRNA deacylase from Thermobifida fusca (strain YX).